An 85-amino-acid polypeptide reads, in one-letter code: ATP synthase subunit c (85 aa).

Helical transmembrane passes span 1 to 21 (MLAW…ALVG) and 53 to 73 (LLFA…VALI).

Belongs to the ATPase C chain family. As to quaternary structure, F-type ATPases have 2 components, F(1) - the catalytic core - and F(0) - the membrane proton channel. F(1) has five subunits: alpha(3), beta(3), gamma(1), delta(1), epsilon(1). F(0) has three main subunits: a(1), b(2) and c(10-14). The alpha and beta chains form an alternating ring which encloses part of the gamma chain. F(1) is attached to F(0) by a central stalk formed by the gamma and epsilon chains, while a peripheral stalk is formed by the delta and b chains.

The protein localises to the cell inner membrane. Functionally, f(1)F(0) ATP synthase produces ATP from ADP in the presence of a proton or sodium gradient. F-type ATPases consist of two structural domains, F(1) containing the extramembraneous catalytic core and F(0) containing the membrane proton channel, linked together by a central stalk and a peripheral stalk. During catalysis, ATP synthesis in the catalytic domain of F(1) is coupled via a rotary mechanism of the central stalk subunits to proton translocation. Key component of the F(0) channel; it plays a direct role in translocation across the membrane. A homomeric c-ring of between 10-14 subunits forms the central stalk rotor element with the F(1) delta and epsilon subunits. The sequence is that of ATP synthase subunit c from Dictyoglomus turgidum (strain DSM 6724 / Z-1310).